We begin with the raw amino-acid sequence, 320 residues long: Acetyl-coenzyme A carboxylase carboxyl transferase subunit alpha (320 aa).

The CoA carboxyltransferase C-terminal domain occupies Ile-42–Glu-295.

This sequence belongs to the AccA family. As to quaternary structure, acetyl-CoA carboxylase is a heterohexamer composed of biotin carboxyl carrier protein (AccB), biotin carboxylase (AccC) and two subunits each of ACCase subunit alpha (AccA) and ACCase subunit beta (AccD).

It is found in the cytoplasm. The enzyme catalyses N(6)-carboxybiotinyl-L-lysyl-[protein] + acetyl-CoA = N(6)-biotinyl-L-lysyl-[protein] + malonyl-CoA. Its pathway is lipid metabolism; malonyl-CoA biosynthesis; malonyl-CoA from acetyl-CoA: step 1/1. Component of the acetyl coenzyme A carboxylase (ACC) complex. First, biotin carboxylase catalyzes the carboxylation of biotin on its carrier protein (BCCP) and then the CO(2) group is transferred by the carboxyltransferase to acetyl-CoA to form malonyl-CoA. This chain is Acetyl-coenzyme A carboxylase carboxyl transferase subunit alpha, found in Rhodopseudomonas palustris (strain HaA2).